Here is a 232-residue protein sequence, read N- to C-terminus: 5'-methylthioadenosine/S-adenosylhomocysteine nucleosidase (232 aa).

The active-site Proton acceptor is the glutamate 12. Substrate contacts are provided by residues glycine 78, isoleucine 152, and 173–174; that span reads ME. Aspartate 197 (proton donor) is an active-site residue.

Belongs to the PNP/UDP phosphorylase family. MtnN subfamily. In terms of assembly, homodimer.

The catalysed reaction is S-adenosyl-L-homocysteine + H2O = S-(5-deoxy-D-ribos-5-yl)-L-homocysteine + adenine. The enzyme catalyses S-methyl-5'-thioadenosine + H2O = 5-(methylsulfanyl)-D-ribose + adenine. It carries out the reaction 5'-deoxyadenosine + H2O = 5-deoxy-D-ribose + adenine. It participates in amino-acid biosynthesis; L-methionine biosynthesis via salvage pathway; S-methyl-5-thio-alpha-D-ribose 1-phosphate from S-methyl-5'-thioadenosine (hydrolase route): step 1/2. Functionally, catalyzes the irreversible cleavage of the glycosidic bond in both 5'-methylthioadenosine (MTA) and S-adenosylhomocysteine (SAH/AdoHcy) to adenine and the corresponding thioribose, 5'-methylthioribose and S-ribosylhomocysteine, respectively. Also cleaves 5'-deoxyadenosine, a toxic by-product of radical S-adenosylmethionine (SAM) enzymes, into 5-deoxyribose and adenine. Thus, is required for in vivo function of the radical SAM enzymes biotin synthase and lipoic acid synthase, that are inhibited by 5'-deoxyadenosine accumulation. The polypeptide is 5'-methylthioadenosine/S-adenosylhomocysteine nucleosidase (Salmonella paratyphi A (strain ATCC 9150 / SARB42)).